The following is a 431-amino-acid chain: tRNA(Ile)-lysidine synthase (431 aa).

Residue 26–31 coordinates ATP; the sequence is SGGVDS.

Belongs to the tRNA(Ile)-lysidine synthase family.

The protein localises to the cytoplasm. It carries out the reaction cytidine(34) in tRNA(Ile2) + L-lysine + ATP = lysidine(34) in tRNA(Ile2) + AMP + diphosphate + H(+). In terms of biological role, ligates lysine onto the cytidine present at position 34 of the AUA codon-specific tRNA(Ile) that contains the anticodon CAU, in an ATP-dependent manner. Cytidine is converted to lysidine, thus changing the amino acid specificity of the tRNA from methionine to isoleucine. This chain is tRNA(Ile)-lysidine synthase, found in Wolbachia pipientis wMel.